Here is a 280-residue protein sequence, read N- to C-terminus: Bifunctional protein FolD (280 aa).

NADP(+) contacts are provided by residues 166–168 (GRS) and S191.

The protein belongs to the tetrahydrofolate dehydrogenase/cyclohydrolase family. In terms of assembly, homodimer.

It catalyses the reaction (6R)-5,10-methylene-5,6,7,8-tetrahydrofolate + NADP(+) = (6R)-5,10-methenyltetrahydrofolate + NADPH. It carries out the reaction (6R)-5,10-methenyltetrahydrofolate + H2O = (6R)-10-formyltetrahydrofolate + H(+). It functions in the pathway one-carbon metabolism; tetrahydrofolate interconversion. Catalyzes the oxidation of 5,10-methylenetetrahydrofolate to 5,10-methenyltetrahydrofolate and then the hydrolysis of 5,10-methenyltetrahydrofolate to 10-formyltetrahydrofolate. In Teredinibacter turnerae (strain ATCC 39867 / T7901), this protein is Bifunctional protein FolD.